The primary structure comprises 727 residues: Tubulin polyglutamylase TTLL11 (727 aa).

Over residues 1-12 (MRRSSPEKKPEA) the composition is skewed to basic and acidic residues. The tract at residues 1 to 88 (MRRSSPEKKP…ARVVRRLPPA (88 aa)) is disordered. A compositionally biased stretch (low complexity) spans 17–34 (DAAAAAAATAAATESLPA). Composition is skewed to basic and acidic residues over residues 49–63 (DPERLELEEQPKDVG) and 72–81 (HAPEEGEARV). Residues 125 to 477 (PVTVDSSKAR…EVKVAVIRDT (353 aa)) form the TTL domain. ATP-binding positions include lysine 246, 252 to 253 (QG), 279 to 282 (QEYI), and 292 to 294 (KFD). Glutamine 252 lines the a protein pocket. Residue arginine 318 participates in L-glutamate binding. 340-341 (TN) provides a ligand contact to ATP. L-glutamate is bound by residues tyrosine 342, serine 343, and lysine 362. Aspartate 425, glutamate 438, and asparagine 440 together coordinate Mg(2+). The c-MTBD region stretch occupies residues 464-566 (LVDEEVKVAV…SICLKQVFPK (103 aa)). Residue lysine 470 coordinates L-glutamate. 2 disordered regions span residues 530–551 (KSFTSKEDLNCDPTGGDSEPNP) and 694–727 (RPLQRNPPQMNRPEHSATGSSAPRVIGASKLSQS).

This sequence belongs to the tubulin--tyrosine ligase family. Mg(2+) is required as a cofactor. As to expression, highly expressed in brain, kidney, liver, lung, muscle and testis. Expressed in heart, spleen and trachea. In the brain, expressed in ependymal cilia, cortex, corpus callosum and striatum.

The protein localises to the cytoplasm. The protein resides in the cytoskeleton. It localises to the cilium basal body. It catalyses the reaction L-glutamyl-[protein] + L-glutamate + ATP = gamma-L-glutamyl-L-glutamyl-[protein] + ADP + phosphate + H(+). It carries out the reaction (L-glutamyl)(n)-gamma-L-glutamyl-L-glutamyl-[protein] + L-glutamate + ATP = (L-glutamyl)(n+1)-gamma-L-glutamyl-L-glutamyl-[protein] + ADP + phosphate + H(+). Polyglutamylase which modifies tubulin, generating polyglutamate side chains of variable lengths on the gamma-carboxyl group of specific glutamate residues within the C-terminal tail of tubulin. Preferentially mediates ATP-dependent polyglutamate long side-chain elongation over the initiation step of the polyglutamylation reaction. Preferentially modifies the alpha-tubulin tail over a beta-tail. Required for CCSAP localization to both spindle and cilia microtubules. Promotes tubulin polyglutamylation which stimulates spastin/SPAST-mediated microtubule severing, thereby regulating microtubule functions. This chain is Tubulin polyglutamylase TTLL11, found in Mus musculus (Mouse).